A 397-amino-acid polypeptide reads, in one-letter code: Torsin-3A (397 aa).

The N-terminal stretch at 1–25 (MLRGPWRQLWLFFLLLLPGAPEPRG) is a signal peptide. N-linked (GlcNAc...) asparagine glycosylation is present at asparagine 122. An ATP-binding site is contributed by 167 to 174 (GWSGTGKN).

Belongs to the ClpA/ClpB family. Torsin subfamily. In terms of assembly, may not form homohexamers. In terms of processing, N-glycosylated. Ubiquitously expressed. Highest expression in stomach, salivary glands and lymph nodes. Isoform 2 is expressed in placenta.

The protein localises to the cytoplasm. It is found in the endoplasmic reticulum lumen. The protein is Torsin-3A (TOR3A) of Homo sapiens (Human).